Here is a 483-residue protein sequence, read N- to C-terminus: Galactose-3-O-sulfotransferase 4 (483 aa).

Residues 1-18 lie on the Cytoplasmic side of the membrane; it reads MGVLSPTRTMRLWGPRSL. Residues 19 to 39 form a helical; Signal-anchor for type II membrane protein membrane-spanning segment; that stretch reads GVALGVFMTIGFALQLLGGPF. Residues 40-483 are Lumenal-facing; sequence QRRLPGLQLR…PLKTSRRPSP (444 aa). The tract at residues 225–248 is disordered; the sequence is KRGNPHVSRDPNPPQLPSGAGPPA. The N-linked (GlcNAc...) asparagine glycan is linked to asparagine 371.

This sequence belongs to the galactose-3-O-sulfotransferase family. Mn(2+) serves as cofactor.

It is found in the golgi apparatus. The protein resides in the golgi stack membrane. The protein operates within protein modification; carbohydrate sulfation. Functionally, catalyzes the transfer of sulfate to beta-1,3-linked galactose residues in O-linked glycoproteins. Good substrates include asialofetuin, Gal-beta-1,3-GalNAc and Gal-beta-1,3 (GlcNAc-beta-1,6)GalNAc. This chain is Galactose-3-O-sulfotransferase 4 (GAL3ST4), found in Bos taurus (Bovine).